Reading from the N-terminus, the 315-residue chain is Lipoyl synthase (315 aa).

Residues C62, C67, C73, C88, C92, C95, and S302 each contribute to the [4Fe-4S] cluster site. Positions F74–K291 constitute a Radical SAM core domain.

This sequence belongs to the radical SAM superfamily. Lipoyl synthase family. Requires [4Fe-4S] cluster as cofactor.

Its subcellular location is the cytoplasm. It catalyses the reaction [[Fe-S] cluster scaffold protein carrying a second [4Fe-4S](2+) cluster] + N(6)-octanoyl-L-lysyl-[protein] + 2 oxidized [2Fe-2S]-[ferredoxin] + 2 S-adenosyl-L-methionine + 4 H(+) = [[Fe-S] cluster scaffold protein] + N(6)-[(R)-dihydrolipoyl]-L-lysyl-[protein] + 4 Fe(3+) + 2 hydrogen sulfide + 2 5'-deoxyadenosine + 2 L-methionine + 2 reduced [2Fe-2S]-[ferredoxin]. It participates in protein modification; protein lipoylation via endogenous pathway; protein N(6)-(lipoyl)lysine from octanoyl-[acyl-carrier-protein]: step 2/2. Its function is as follows. Catalyzes the radical-mediated insertion of two sulfur atoms into the C-6 and C-8 positions of the octanoyl moiety bound to the lipoyl domains of lipoate-dependent enzymes, thereby converting the octanoylated domains into lipoylated derivatives. This Aromatoleum aromaticum (strain DSM 19018 / LMG 30748 / EbN1) (Azoarcus sp. (strain EbN1)) protein is Lipoyl synthase.